We begin with the raw amino-acid sequence, 296 residues long: Bifunctional protein FolD (296 aa).

NADP(+) is bound by residues 169–171 (GRG), threonine 196, and valine 237.

Belongs to the tetrahydrofolate dehydrogenase/cyclohydrolase family. In terms of assembly, homodimer.

The enzyme catalyses (6R)-5,10-methylene-5,6,7,8-tetrahydrofolate + NADP(+) = (6R)-5,10-methenyltetrahydrofolate + NADPH. It carries out the reaction (6R)-5,10-methenyltetrahydrofolate + H2O = (6R)-10-formyltetrahydrofolate + H(+). It participates in one-carbon metabolism; tetrahydrofolate interconversion. Functionally, catalyzes the oxidation of 5,10-methylenetetrahydrofolate to 5,10-methenyltetrahydrofolate and then the hydrolysis of 5,10-methenyltetrahydrofolate to 10-formyltetrahydrofolate. In Kocuria rhizophila (strain ATCC 9341 / DSM 348 / NBRC 103217 / DC2201), this protein is Bifunctional protein FolD.